The chain runs to 402 residues: Probable tRNA pseudouridine synthase tag-124 (402 aa).

Catalysis depends on D85, which acts as the Nucleophile. The disordered stretch occupies residues 383 to 402 (SKKEKMAEKKKNGEESSDKL).

Belongs to the tRNA pseudouridine synthase TruA family.

The catalysed reaction is a uridine in tRNA = a pseudouridine in tRNA. Its function is as follows. Formation of pseudouridine at position 38 and 39 in the anticodon stem and loop of transfer RNAs. The polypeptide is Probable tRNA pseudouridine synthase tag-124 (tag-124) (Caenorhabditis elegans).